The primary structure comprises 102 residues: Putative pterin-4-alpha-carbinolamine dehydratase (102 aa).

It belongs to the pterin-4-alpha-carbinolamine dehydratase family.

The catalysed reaction is (4aS,6R)-4a-hydroxy-L-erythro-5,6,7,8-tetrahydrobiopterin = (6R)-L-erythro-6,7-dihydrobiopterin + H2O. The polypeptide is Putative pterin-4-alpha-carbinolamine dehydratase (Burkholderia vietnamiensis (strain G4 / LMG 22486) (Burkholderia cepacia (strain R1808))).